The following is a 178-amino-acid chain: Protein SPEAR1 (178 aa).

Disordered regions lie at residues 1 to 48 and 139 to 178; these read MGST…QRGL and HFLNEDPSSTTRRSKSLGSGIQHSGSSENQEVDLELRLSL. Low complexity predominate over residues 14-28; the sequence is SSPPSSSPTSSSSSP. Residues 46 to 54 carry the SPL motif; sequence RGLGVAQLE. Over residues 144-167 the composition is skewed to polar residues; the sequence is DPSSTTRRSKSLGSGIQHSGSSEN. The short motif at 170–176 is the EAR element; sequence VDLELRL.

In terms of assembly, interacts with SPL and SPEAR2. In terms of tissue distribution, not detected in leaves.

Its function is as follows. Adapter-like transcriptional repressor recruiting TPL/TPR corepressors to inhibit TCP transcription factors. The sequence is that of Protein SPEAR1 from Arabidopsis thaliana (Mouse-ear cress).